Consider the following 281-residue polypeptide: N-acetyltransferase ECO1 (281 aa).

The CCHH-type zinc finger occupies 33-57 (VKCDKCEMSYSSTSIEDRAIHEKYH). The disordered stretch occupies residues 86-105 (LSRSTGTITPLNSSPLKKSS). Positions 95 to 105 (PLNSSPLKKSS) are enriched in low complexity. Lys223 is modified (N6-acetyllysine; by autocatalysis).

This sequence belongs to the acetyltransferase family. ECO subfamily. Binds specifically to CHL12, RFC1, RFC2, RFC3, RFC4, RFC5 and RAD24 when members of an RFC complex. Interacts with CHL1 and MPS3. Post-translationally, autoacetylates in vitro.

It is found in the nucleus. In terms of biological role, required for establishment of sister chromatid cohesion during S phase but not for its further maintenance during G2 or M phases or for loading the cohesin complex onto DNA. Interacts with the three known alternate replication factor C (RFC) complexes, suggesting that these complexes have essential but redundant activity in cohesion establishment. Acts by acetylating the cohesin complex component SMC3. In vitro, possesses acetyltransferase activity where it can acetylate itself and components of the cohesin complex (MCD1, IRR1 and PDS5), but is unable to acetylate histones. This Saccharomyces cerevisiae (strain ATCC 204508 / S288c) (Baker's yeast) protein is N-acetyltransferase ECO1 (ECO1).